The primary structure comprises 984 residues: Ephrin type-B receptor 1 (984 aa).

An Eph LBD domain is found at glutamate 1–glutamine 182. Residues glutamate 1–leucine 541 are Extracellular-facing. 2 consecutive Fibronectin type-III domains span residues valine 303–alanine 413 and alanine 414–aspartate 528. Residues asparagine 315, asparagine 407, and asparagine 480 are each glycosylated (N-linked (GlcNAc...) asparagine). A helical transmembrane segment spans residues isoleucine 542 to valine 562. Over cysteine 563–alanine 984 the chain is Cytoplasmic. One can recognise a Protein kinase domain in the interval valine 619 to isoleucine 882. Residues isoleucine 625 to valine 633 and lysine 651 each bind ATP. Aspartate 744 acts as the Proton acceptor in catalysis. The SAM domain maps to threonine 911–glutamine 975. Positions serine 982–alanine 984 match the PDZ-binding motif.

The protein belongs to the protein kinase superfamily. Tyr protein kinase family. Ephrin receptor subfamily. Heterotetramer upon binding of the ligand. The heterotetramer is composed of an ephrin dimer and a receptor dimer. Oligomerization is probably required to induce biological responses. Phosphorylated. Autophosphorylation is stimulated by ligands. Expressed at high levels in the 10-day embryo, and in adult brain, lung, heart and skeletal muscle. Low levels of expression detected in all other adult tissues tested.

Its subcellular location is the cell membrane. It localises to the early endosome membrane. The protein localises to the cell projection. The protein resides in the dendrite. The enzyme catalyses L-tyrosyl-[protein] + ATP = O-phospho-L-tyrosyl-[protein] + ADP + H(+). Receptor tyrosine kinase which binds promiscuously transmembrane ephrin-B family ligands residing on adjacent cells, leading to contact-dependent bidirectional signaling into neighboring cells. The signaling pathway downstream of the receptor is referred to as forward signaling while the signaling pathway downstream of the ephrin ligand is referred to as reverse signaling. May play a role in axon guidance during nervous system development. May also play an important redundant role with other ephrin-B receptors in development and maturation of dendritic spines and synapse formation. More generally, may play a role in targeted cell migration and adhesion. Upon activation by ephrin-B ligands activates the MAPK/ERK and the JNK signaling cascades to regulate cell migration and adhesion respectively. This Gallus gallus (Chicken) protein is Ephrin type-B receptor 1 (EPHB1).